The chain runs to 143 residues: High mobility group protein B (143 aa).

The disordered stretch occupies residues 1 to 22 (MSKAASQYATLEDLPSKPKRPQ). Positions 18–86 (PKRPQTGFFI…TYDKQNDQWK (69 aa)) form a DNA-binding region, HMG box. At Ala70 the chain carries Blocked amino end (Ala). 2 stretches are compositionally biased toward basic and acidic residues: residues 100 to 120 (AKKA…ELEK) and 131 to 143 (AKKD…AKKK). The disordered stretch occupies residues 100–143 (AKKALKEKTKKSKAAEKELEKSKKKAPAAAPAKKDDKKAPAKKK).

The protein localises to the nucleus. It is found in the chromosome. In Tetrahymena thermophila, this protein is High mobility group protein B.